The sequence spans 549 residues: DDB1- and CUL4-associated factor 11 (549 aa).

The span at 1–24 (MGSRNSSSAGSGSLEPSEGLSRRG) shows a compositional bias: low complexity. Residues 1–40 (MGSRNSSSAGSGSLEPSEGLSRRGTGLRRSEEEEEEDEDV) form a disordered region. Phosphoserine occurs at positions 73 and 75. WD repeat units lie at residues 170-210 (TYSQ…HKFK), 216-258 (DVGW…TALD), 263-302 (ERRF…RTLQ), 305-345 (SHED…EDDP), 353-392 (GHQD…SREG), 435-480 (GVLH…KKLT), and 481-520 (NHKA…YFQD).

Interacts with DDB1 and CUL4A.

Its pathway is protein modification; protein ubiquitination. In terms of biological role, may function as a substrate receptor for CUL4-DDB1 E3 ubiquitin-protein ligase complex. This is DDB1- and CUL4-associated factor 11 (Dcaf11) from Mus musculus (Mouse).